The following is a 143-amino-acid chain: Large ribosomal subunit protein uL11 (143 aa).

Belongs to the universal ribosomal protein uL11 family. Part of the ribosomal stalk of the 50S ribosomal subunit. Interacts with L10 and the large rRNA to form the base of the stalk. L10 forms an elongated spine to which L12 dimers bind in a sequential fashion forming a multimeric L10(L12)X complex. One or more lysine residues are methylated.

In terms of biological role, forms part of the ribosomal stalk which helps the ribosome interact with GTP-bound translation factors. This is Large ribosomal subunit protein uL11 from Bifidobacterium adolescentis (strain ATCC 15703 / DSM 20083 / NCTC 11814 / E194a).